We begin with the raw amino-acid sequence, 529 residues long: uncharacterized protein (529 aa).

Positions 157-410 (DFPHIICEIE…FKNRVRENID (254 aa)) constitute a Radical SAM core domain. Residues C171, C176, and C179 each coordinate [4Fe-4S] cluster.

The cofactor is [4Fe-4S] cluster.

This is an uncharacterized protein from Archaeoglobus fulgidus (strain ATCC 49558 / DSM 4304 / JCM 9628 / NBRC 100126 / VC-16).